Here is a 651-residue protein sequence, read N- to C-terminus: Kinesin-like protein KIF22-A (651 aa).

Residues 31 to 359 (RVRVAVRLRP…LNFAAKSKQI (329 aa)) enclose the Kinesin motor domain. 116-123 (GPTGAGKT) provides a ligand contact to ATP. The disordered stretch occupies residues 366 to 413 (QETTQTVVQPAMKRPREETGHIAGSQKRKKSKNDSTESSPNSSMDTAG). A compositionally biased stretch (polar residues) spans 401–410 (TESSPNSSMD). The stretch at 452–498 (KRERMALLKKWEESQMEIERLKEKQKELEQKAMEAEARLEKSNNSDL) forms a coiled coil. The Important for regulated proteolytic degradation signature appears at 561 to 564 (GLEN).

This sequence belongs to the TRAFAC class myosin-kinesin ATPase superfamily. Kinesin family. Ubiquitinated, leading to its subsequent proteasomal degradation.

The protein resides in the nucleus. It localises to the cytoplasm. Its subcellular location is the cytoskeleton. In terms of biological role, kinesin family member that is involved in spindle formation and the movements of chromosomes during mitosis and meiosis. Binds to microtubules and to DNA. This chain is Kinesin-like protein KIF22-A (kif22-a), found in Xenopus laevis (African clawed frog).